We begin with the raw amino-acid sequence, 127 residues long: Large ribosomal subunit protein eL8 (127 aa).

Belongs to the eukaryotic ribosomal protein eL8 family. Part of the 50S ribosomal subunit. Probably part of the RNase P complex.

Its subcellular location is the cytoplasm. Functionally, multifunctional RNA-binding protein that recognizes the K-turn motif in ribosomal RNA, the RNA component of RNase P, box H/ACA, box C/D and box C'/D' sRNAs. This Hyperthermus butylicus (strain DSM 5456 / JCM 9403 / PLM1-5) protein is Large ribosomal subunit protein eL8.